The following is a 165-amino-acid chain: Large ribosomal subunit protein uL10 (165 aa).

It belongs to the universal ribosomal protein uL10 family. As to quaternary structure, part of the ribosomal stalk of the 50S ribosomal subunit. The N-terminus interacts with L11 and the large rRNA to form the base of the stalk. The C-terminus forms an elongated spine to which L12 dimers bind in a sequential fashion forming a multimeric L10(L12)X complex.

Functionally, forms part of the ribosomal stalk, playing a central role in the interaction of the ribosome with GTP-bound translation factors. The chain is Large ribosomal subunit protein uL10 from Pectobacterium atrosepticum (strain SCRI 1043 / ATCC BAA-672) (Erwinia carotovora subsp. atroseptica).